A 727-amino-acid chain; its full sequence is UvrABC system protein C (727 aa).

The region spanning 16 to 95 (VDPGVYKFRD…IKEFDPRFNV (80 aa)) is the GIY-YIG domain. Positions 208-243 (DRLVRQLEARMQEASEELDFETAARLRDDVGALRRA) constitute a UVR domain. 2 disordered regions span residues 503–527 (DADQ…QTGR) and 679–727 (SADV…TGVE). A compositionally biased stretch (basic and acidic residues) spans 701 to 711 (NGADIPREPVE). Residues 718-727 (QSASQRTGVE) show a composition bias toward polar residues.

The protein belongs to the UvrC family. As to quaternary structure, interacts with UvrB in an incision complex.

The protein resides in the cytoplasm. In terms of biological role, the UvrABC repair system catalyzes the recognition and processing of DNA lesions. UvrC both incises the 5' and 3' sides of the lesion. The N-terminal half is responsible for the 3' incision and the C-terminal half is responsible for the 5' incision. The chain is UvrABC system protein C from Rhodococcus jostii (strain RHA1).